The following is an 807-amino-acid chain: Leucine--tRNA ligase (807 aa).

Positions 38–49 (PYPSGSGLHVGH) match the 'HIGH' region motif. The 'KMSKS' region signature appears at 579 to 583 (KMSKS). Lys582 contacts ATP.

It belongs to the class-I aminoacyl-tRNA synthetase family.

It localises to the cytoplasm. It catalyses the reaction tRNA(Leu) + L-leucine + ATP = L-leucyl-tRNA(Leu) + AMP + diphosphate. The chain is Leucine--tRNA ligase from Mycoplasmopsis pulmonis (strain UAB CTIP) (Mycoplasma pulmonis).